Consider the following 132-residue polypeptide: Agouti-signaling protein (132 aa).

The first 22 residues, 1–22, serve as a signal peptide directing secretion; that stretch reads MDVTRLLLATLLVFLCFFAAYS. N-linked (GlcNAc...) asparagine glycosylation is present at N39. The interval 61-93 is disordered; sequence KISRKEAEKKRSSKKEASKQKVARPRTPLSVPC. A compositionally biased stretch (basic and acidic residues) spans 64–79; that stretch reads RKEAEKKRSSKKEASK. 5 disulfide bridges follow: C93/C108, C100/C114, C107/C125, C111/C132, and C116/C123. An Agouti domain is found at 93 to 132; sequence CVSTRGSCKPPAPACCHPCASCQCRFFRSACSCRVLNVNC.

It is found in the secreted. Its function is as follows. Involved in the regulation of melanogenesis. The binding of ASP to MC1R precludes alpha-MSH initiated signaling and thus blocks production of cAMP, leading to a down-regulation of eumelanogenesis (brown/black pigment) and thus increasing synthesis of pheomelanin (yellow/red pigment). This Callithrix geoffroyi (Geoffroy's marmoset) protein is Agouti-signaling protein (ASIP).